We begin with the raw amino-acid sequence, 177 residues long: Putative adenylate kinase (177 aa).

Positions 10, 12, 13, 14, and 15 each coordinate ATP. Positions 30 to 50 (SLRDYAIEKGIGEMKGDELEV) are NMP. The segment at 99-109 (ERGYSREKVGE) is LID. Arg100 and Lys138 together coordinate ATP.

It belongs to the adenylate kinase family. AK6 subfamily. Interacts with uS11. Not a structural component of 40S pre-ribosomes, but transiently interacts with them by binding to uS11.

It catalyses the reaction AMP + ATP = 2 ADP. The enzyme catalyses ATP + H2O = ADP + phosphate + H(+). Its function is as follows. Broad-specificity nucleoside monophosphate (NMP) kinase that catalyzes the reversible transfer of the terminal phosphate group between nucleoside triphosphates and monophosphates. Also has ATPase activity. Involved in the late maturation steps of the 30S ribosomal particles, specifically 16S rRNA maturation. While NMP activity is not required for ribosome maturation, ATPase activity is. Associates transiently with small ribosomal subunit protein uS11. ATP hydrolysis breaks the interaction with uS11. May temporarily remove uS11 from the ribosome to enable a conformational change of the ribosomal RNA that is needed for the final maturation step of the small ribosomal subunit. The chain is Putative adenylate kinase from Thermococcus gammatolerans (strain DSM 15229 / JCM 11827 / EJ3).